The sequence spans 211 residues: Uridine kinase (211 aa).

Gly12–Thr19 provides a ligand contact to ATP.

It belongs to the uridine kinase family.

The protein resides in the cytoplasm. The enzyme catalyses uridine + ATP = UMP + ADP + H(+). It catalyses the reaction cytidine + ATP = CMP + ADP + H(+). The protein operates within pyrimidine metabolism; CTP biosynthesis via salvage pathway; CTP from cytidine: step 1/3. Its pathway is pyrimidine metabolism; UMP biosynthesis via salvage pathway; UMP from uridine: step 1/1. This chain is Uridine kinase, found in Streptococcus thermophilus (strain CNRZ 1066).